The sequence spans 141 residues: Nucleoside diphosphate kinase (141 aa).

6 residues coordinate ATP: lysine 11, phenylalanine 59, arginine 87, threonine 93, arginine 104, and asparagine 114. Residue histidine 117 is the Pros-phosphohistidine intermediate of the active site.

It belongs to the NDK family. Homotetramer. The cofactor is Mg(2+).

The protein resides in the cytoplasm. It catalyses the reaction a 2'-deoxyribonucleoside 5'-diphosphate + ATP = a 2'-deoxyribonucleoside 5'-triphosphate + ADP. The catalysed reaction is a ribonucleoside 5'-diphosphate + ATP = a ribonucleoside 5'-triphosphate + ADP. In terms of biological role, major role in the synthesis of nucleoside triphosphates other than ATP. The ATP gamma phosphate is transferred to the NDP beta phosphate via a ping-pong mechanism, using a phosphorylated active-site intermediate. The sequence is that of Nucleoside diphosphate kinase from Bordetella petrii (strain ATCC BAA-461 / DSM 12804 / CCUG 43448).